Reading from the N-terminus, the 406-residue chain is Acetate kinase (406 aa).

N10 serves as a coordination point for Mg(2+). K17 is a binding site for ATP. Position 92 (R92) interacts with substrate. D151 functions as the Proton donor/acceptor in the catalytic mechanism. ATP contacts are provided by residues 211–215 (HLGSG), 286–288 (DFR), and 335–339 (GIGEN). E389 contacts Mg(2+).

It belongs to the acetokinase family. As to quaternary structure, homodimer. It depends on Mg(2+) as a cofactor. Mn(2+) serves as cofactor.

Its subcellular location is the cytoplasm. The enzyme catalyses acetate + ATP = acetyl phosphate + ADP. It participates in metabolic intermediate biosynthesis; acetyl-CoA biosynthesis; acetyl-CoA from acetate: step 1/2. In terms of biological role, catalyzes the formation of acetyl phosphate from acetate and ATP. Can also catalyze the reverse reaction. In Buchnera aphidicola subsp. Cinara cedri (strain Cc), this protein is Acetate kinase.